A 402-amino-acid chain; its full sequence is MLRWLTAGESHGPELIAVLEGLPAGVPVSPDAIRADLARRKLGYGRGSRMKFEQDALEVSGGVRHGLSLGSPVALRIGNSEWPKWVDLMSPEPIAAEKLAGARGAPLTRPRPGHADLAGMQKYGFDEARPVLERASARETAARVALGAVARSFLGELGITLVSHTLSIGPVRVPEDAVWPTPADVAALDADPLRCFDRATSARMVAEVDAAHKDGDTLGGVIEVLAYGLPPGLGSYVHWDRRLDAQLAAALMGIQAIKGVEVGDGFLTATRRGSEAHDELVAEDGAIVRQSGRAGGTEGGMSTGGVLRVRAGMKPIATVPRALRTIDVATSEAAPAHHQRSDVCAVPAAGVVAEAMVALVLANAVLEKFGGDSIGETARNLRGYLDAISQNLATERVSAPYA.

Residues R40 and R46 each contribute to the NADP(+) site. FMN is bound by residues 134-136, 255-256, G299, 314-318, and R340; these read RAS, QA, and KPIAT.

Belongs to the chorismate synthase family. In terms of assembly, homotetramer. It depends on FMNH2 as a cofactor.

The enzyme catalyses 5-O-(1-carboxyvinyl)-3-phosphoshikimate = chorismate + phosphate. It functions in the pathway metabolic intermediate biosynthesis; chorismate biosynthesis; chorismate from D-erythrose 4-phosphate and phosphoenolpyruvate: step 7/7. In terms of biological role, catalyzes the anti-1,4-elimination of the C-3 phosphate and the C-6 proR hydrogen from 5-enolpyruvylshikimate-3-phosphate (EPSP) to yield chorismate, which is the branch point compound that serves as the starting substrate for the three terminal pathways of aromatic amino acid biosynthesis. This reaction introduces a second double bond into the aromatic ring system. The protein is Chorismate synthase of Leifsonia xyli subsp. xyli (strain CTCB07).